A 139-amino-acid polypeptide reads, in one-letter code: Small ribosomal subunit protein uS12 (139 aa).

The segment at 118–139 (AGVANRNQSRSRYGTKKPKPKS) is disordered. The segment covering 130-139 (YGTKKPKPKS) has biased composition (basic residues).

It belongs to the universal ribosomal protein uS12 family. As to quaternary structure, part of the 30S ribosomal subunit. Contacts proteins S8 and S17. May interact with IF1 in the 30S initiation complex.

With S4 and S5 plays an important role in translational accuracy. Functionally, interacts with and stabilizes bases of the 16S rRNA that are involved in tRNA selection in the A site and with the mRNA backbone. Located at the interface of the 30S and 50S subunits, it traverses the body of the 30S subunit contacting proteins on the other side and probably holding the rRNA structure together. The combined cluster of proteins S8, S12 and S17 appears to hold together the shoulder and platform of the 30S subunit. The chain is Small ribosomal subunit protein uS12 from Mycoplasma mobile (strain ATCC 43663 / 163K / NCTC 11711) (Mesomycoplasma mobile).